Here is a 1219-residue protein sequence, read N- to C-terminus: Pleckstrin homology domain-containing family G member 3 (1219 aa).

A compositionally biased stretch (polar residues) spans 1-10 (MPVSTSLHQD). The disordered stretch occupies residues 1-66 (MPVSTSLHQD…HLPNSNNNSS (66 aa)). A compositionally biased stretch (low complexity) spans 18–46 (SLTSTTSSSGSSCDSRSAMEEPSSSEAPA). Ser-76 carries the phosphoserine modification. Residues 93-272 (YLGRVVREIV…TCVAWYINDM (180 aa)) form the DH domain. Positions 296–394 (DLTTYGELVL…WTHHIKRLIL (99 aa)) constitute a PH domain. Over residues 431–442 (WSSQDEVSTNVR) the composition is skewed to polar residues. Disordered stretches follow at residues 431 to 599 (WSSQ…PSVL) and 613 to 708 (FSRR…KESA). Ser-433 carries the phosphoserine modification. The segment covering 446-463 (RQSEPTKHLLRQLNEKAR) has biased composition (basic and acidic residues). Phosphoserine is present on residues Ser-576, Ser-577, Ser-618, Ser-631, Ser-640, Ser-643, and Ser-647. A compositionally biased stretch (low complexity) spans 630-645 (GSPRLVSRSSSVLSLE). Residues 696–708 (EPDRSSCKKKESA) are compositionally biased toward basic and acidic residues. Ser-741, Ser-779, and Ser-827 each carry phosphoserine. Disordered regions lie at residues 756–780 (RFNSLPRPDPEPVPPVGSKRQVGSR), 821–840 (MESSGGSPGKGPGQGQANGF), 859–878 (EESATASPESSSPTEGRSPA), 955–1133 (APER…LYVT), and 1146–1207 (VMEK…RVRN). A compositionally biased stretch (gly residues) spans 826–836 (GSPGKGPGQGQ). Low complexity predominate over residues 859 to 873 (EESATASPESSSPTE). Ser-962, Ser-1011, Ser-1023, Ser-1037, and Ser-1040 each carry phosphoserine. Positions 1020-1029 (SAVSQRTTSP) are enriched in polar residues. Residues 1049 to 1065 (DVRELCSKYASRDEARR) are compositionally biased toward basic and acidic residues. Ser-1081 bears the Phosphoserine mark. Arg-1107 carries the post-translational modification Omega-N-methylarginine. The segment covering 1187 to 1197 (QPKEEGSRDPA) has biased composition (basic and acidic residues).

It localises to the cytoplasm. Its subcellular location is the cytoskeleton. In terms of biological role, plays a role in controlling cell polarity and cell motility by selectively binding newly polymerized actin and activating RAC1 and CDC42 to enhance local actin polymerization. The polypeptide is Pleckstrin homology domain-containing family G member 3 (Homo sapiens (Human)).